The sequence spans 245 residues: Putative [LysW]-aminoadipate/[LysW]-glutamate kinase (245 aa).

Positions 60 and 162 each coordinate substrate.

This sequence belongs to the acetylglutamate kinase family. LysZ subfamily.

The protein localises to the cytoplasm. It carries out the reaction [amino-group carrier protein]-C-terminal-N-(1,4-dicarboxybutan-1-yl)-L-glutamine + ATP = [amino-group carrier protein]-C-terminal-N-(1-carboxy-5-phosphooxy-5-oxopentan-1-yl)-L-glutamine + ADP. The enzyme catalyses [amino-group carrier protein]-C-terminal-gamma-(L-glutamyl)-L-glutamate + ATP = [amino-group carrier protein]-C-terminal-gamma-(5-phospho-L-glutamyl)-L-glutamate + ADP. It participates in amino-acid biosynthesis; L-lysine biosynthesis via AAA pathway; L-lysine from L-alpha-aminoadipate (Thermus route): step 2/5. Its pathway is amino-acid biosynthesis; L-arginine biosynthesis. Functionally, involved in both the arginine and lysine biosynthetic pathways. Phosphorylates the LysW-bound precursors glutamate (for arginine biosynthesis), respectively alpha-aminoadipate (for lysine biosynthesis). This is Putative [LysW]-aminoadipate/[LysW]-glutamate kinase from Pyrococcus abyssi (strain GE5 / Orsay).